Reading from the N-terminus, the 340-residue chain is Ketol-acid reductoisomerase (NADP(+)) (340 aa).

The KARI N-terminal Rossmann domain occupies Val-3–Thr-182. Residues Tyr-26–Gln-29, Arg-49, Ser-53, and Asp-83–Gln-86 contribute to the NADP(+) site. His-108 is an active-site residue. Gly-134 is an NADP(+) binding site. Residues Thr-183 to Val-328 enclose the KARI C-terminal knotted domain. Residues Asp-191, Glu-195, Glu-227, and Glu-231 each contribute to the Mg(2+) site. A substrate-binding site is contributed by Ser-252.

Belongs to the ketol-acid reductoisomerase family. Mg(2+) is required as a cofactor.

The catalysed reaction is (2R)-2,3-dihydroxy-3-methylbutanoate + NADP(+) = (2S)-2-acetolactate + NADPH + H(+). It carries out the reaction (2R,3R)-2,3-dihydroxy-3-methylpentanoate + NADP(+) = (S)-2-ethyl-2-hydroxy-3-oxobutanoate + NADPH + H(+). It functions in the pathway amino-acid biosynthesis; L-isoleucine biosynthesis; L-isoleucine from 2-oxobutanoate: step 2/4. The protein operates within amino-acid biosynthesis; L-valine biosynthesis; L-valine from pyruvate: step 2/4. Involved in the biosynthesis of branched-chain amino acids (BCAA). Catalyzes an alkyl-migration followed by a ketol-acid reduction of (S)-2-acetolactate (S2AL) to yield (R)-2,3-dihydroxy-isovalerate. In the isomerase reaction, S2AL is rearranged via a Mg-dependent methyl migration to produce 3-hydroxy-3-methyl-2-ketobutyrate (HMKB). In the reductase reaction, this 2-ketoacid undergoes a metal-dependent reduction by NADPH to yield (R)-2,3-dihydroxy-isovalerate. In Streptococcus pneumoniae (strain JJA), this protein is Ketol-acid reductoisomerase (NADP(+)).